Reading from the N-terminus, the 353-residue chain is WD repeat-containing protein 55 (353 aa).

WD repeat units lie at residues 4–43 (DLGA…SLVR), 49–88 (AHKE…QVAH), 92–130 (AHED…CSHE), 133–172 (AHED…VQSQ), 175–214 (FSED…DCSD), 218–257 (DLAP…IIQP), and 260–299 (SHDY…EGSN). The interval 300–353 (VNSGNASGAAEDSDSDNDGMDLDNDPSKSSKGSKRKTKSKANTLNATNNFFADL) is disordered. Over residues 310-323 (EDSDSDNDGMDLDN) the composition is skewed to acidic residues. A compositionally biased stretch (low complexity) spans 339–353 (KANTLNATNNFFADL).

Belongs to the WD repeat WDR55 family. As to quaternary structure, interacts with DDB1A. Highly expressed in roots. Expressed in cotyledons, leaves, buds and flowers.

Its subcellular location is the nucleus. The protein localises to the cytoplasm. In terms of biological role, required for male and female gametogenesis, seed development, and embryo and endosperm development at early stages. Involved in the establishment of bilateral symmetry in the transition from the globular to the heart embryo stage. May act in the frame of a CRL4 complex. Required for proper vegetative growth and organization of the adult plant body. May play a role in hormonal control of plant development. The sequence is that of WD repeat-containing protein 55 from Arabidopsis thaliana (Mouse-ear cress).